The chain runs to 556 residues: Capsid vertex component 2 (556 aa).

The interaction with major capsid protein/MCP stretch occupies residues 1–54; the sequence is MWPVGSSYTRACSVQRWPKRCVYWAPSPQNVLEINPHRFQESRRSAALYRKHVV. The interval 104-136 is disordered; sequence QPASSNQGGARPQTDPHVPQPAPAIPSAPPKEN. Pro residues predominate over residues 121-132; the sequence is VPQPAPAIPSAP.

Belongs to the herpesviridae CVC2 protein family. In terms of assembly, heterodimerizes with CVC1. Interacts with major capsid protein/MCP and triplex capsid protein 1/TRX1 at the pentamer vertices. Interacts with the large tegument protein/LTP.

The protein resides in the virion. It is found in the host nucleus. Its function is as follows. Capsid vertex-specific component that plays a role during viral DNA encapsidation, assuring correct genome cleavage and presumably stabilizing capsids that contain full-length viral genomes. Participates in the interaction between the capsid and the tegument through interaction with the large tegument protein/LTP. This is Capsid vertex component 2 from Connochaetes taurinus (Blue wildebeest).